The following is a 330-amino-acid chain: D-alanine--D-alanine ligase (330 aa).

An ATP-grasp domain is found at 120–326 (KLWYDALGIP…FKTFLQKAVL (207 aa)). 150-205 (AFKQWGGLFVKAACQGSSVGCYKVTSEAELSKAINDAFGYSQQVLVEKAVKPRELE) contacts ATP. Residues Asp280, Glu293, and Asn295 each coordinate Mg(2+).

The protein belongs to the D-alanine--D-alanine ligase family. Mg(2+) serves as cofactor. The cofactor is Mn(2+).

It is found in the cytoplasm. The enzyme catalyses 2 D-alanine + ATP = D-alanyl-D-alanine + ADP + phosphate + H(+). It participates in cell wall biogenesis; peptidoglycan biosynthesis. Its function is as follows. Cell wall formation. The chain is D-alanine--D-alanine ligase from Aliivibrio fischeri (strain ATCC 700601 / ES114) (Vibrio fischeri).